The primary structure comprises 235 residues: ATP-dependent Clp protease proteolytic subunit (235 aa).

Residue Ser123 is the Nucleophile of the active site. His148 is an active-site residue.

The protein belongs to the peptidase S14 family. Fourteen ClpP subunits assemble into 2 heptameric rings which stack back to back to give a disk-like structure with a central cavity, resembling the structure of eukaryotic proteasomes.

The protein resides in the cytoplasm. It carries out the reaction Hydrolysis of proteins to small peptides in the presence of ATP and magnesium. alpha-casein is the usual test substrate. In the absence of ATP, only oligopeptides shorter than five residues are hydrolyzed (such as succinyl-Leu-Tyr-|-NHMec, and Leu-Tyr-Leu-|-Tyr-Trp, in which cleavage of the -Tyr-|-Leu- and -Tyr-|-Trp bonds also occurs).. Cleaves peptides in various proteins in a process that requires ATP hydrolysis. Has a chymotrypsin-like activity. Plays a major role in the degradation of misfolded proteins. The polypeptide is ATP-dependent Clp protease proteolytic subunit (Novosphingobium aromaticivorans (strain ATCC 700278 / DSM 12444 / CCUG 56034 / CIP 105152 / NBRC 16084 / F199)).